The primary structure comprises 928 residues: Periplasmic nitrate reductase (928 aa).

The segment at residues 1-33 is a signal peptide (tat-type signal); the sequence is MAFSRREFLKSAAAASAASAVGMSVPSQLLAQA. The 4Fe-4S Mo/W bis-MGD-type domain occupies 40-96; the sequence is WRWDKSVCRFCGTGCGIMVATKNDQIVAVKGDPAAPVNRGLNCIKGYFNAKIMYGAD. Cys-47, Cys-50, Cys-54, and Cys-82 together coordinate [4Fe-4S] cluster. Residues Lys-84, Gln-152, Asn-177, Cys-181, 214–221, 265–267, Met-422, Gln-426, Asn-532, 557–558, Lys-580, Asp-607, and 818–827 each bind Mo-bis(molybdopterin guanine dinucleotide); these read WGANMAEM, QTD, SD, and TGRVLEHWHS. Residue Trp-894 participates in substrate binding. 2 residues coordinate Mo-bis(molybdopterin guanine dinucleotide): Asn-902 and Lys-919.

The protein belongs to the prokaryotic molybdopterin-containing oxidoreductase family. NasA/NapA/NarB subfamily. In terms of assembly, component of the periplasmic nitrate reductase NapAB complex composed of NapA and NapB. [4Fe-4S] cluster is required as a cofactor. The cofactor is Mo-bis(molybdopterin guanine dinucleotide). Post-translationally, predicted to be exported by the Tat system. The position of the signal peptide cleavage has not been experimentally proven.

The protein localises to the periplasm. The enzyme catalyses 2 Fe(II)-[cytochrome] + nitrate + 2 H(+) = 2 Fe(III)-[cytochrome] + nitrite + H2O. Its function is as follows. Catalytic subunit of the periplasmic nitrate reductase complex NapAB. Receives electrons from NapB and catalyzes the reduction of nitrate to nitrite. This chain is Periplasmic nitrate reductase, found in Wolinella succinogenes (strain ATCC 29543 / DSM 1740 / CCUG 13145 / JCM 31913 / LMG 7466 / NCTC 11488 / FDC 602W) (Vibrio succinogenes).